A 440-amino-acid polypeptide reads, in one-letter code: Transposon Ty1-DR3 Gag polyprotein (440 aa).

Composition is skewed to polar residues over residues 1 to 10, 48 to 60, and 127 to 152; these read MESQQLSNYP, TKANSQQTTTPAS, and QSQFPQYPSSVGTPLSTPSPESGNTF. Disordered stretches follow at residues 1 to 93, 126 to 173, and 352 to 440; these read MESQ…MMTQ, PQSQ…RPPP, and GSRN…PETY. Residues 153 to 165 show a composition bias toward low complexity; it reads TDSSSADSDMTST. An RNA-binding region spans residues 299–401; that stretch reads NNGIHINNKV…NSKSKTARAH (103 aa). Residues 402–428 show a composition bias toward polar residues; it reads NVSTSINSPSTDNDSISKSTTEPIQLN. At serine 416 the chain carries Phosphoserine. Positions 429–440 are enriched in basic and acidic residues; the sequence is NKHDLHLRPETY.

Homotrimer.

It localises to the cytoplasm. Functionally, capsid protein (CA) is the structural component of the virus-like particle (VLP), forming the shell that encapsulates the retrotransposons dimeric RNA genome. The particles are assembled from trimer-clustered units and there are holes in the capsid shells that allow for the diffusion of macromolecules. CA also has nucleocapsid-like chaperone activity, promoting primer tRNA(i)-Met annealing to the multipartite primer-binding site (PBS), dimerization of Ty1 RNA and initiation of reverse transcription. This Saccharomyces cerevisiae (strain ATCC 204508 / S288c) (Baker's yeast) protein is Transposon Ty1-DR3 Gag polyprotein (TY1A-DR3).